Here is a 375-residue protein sequence, read N- to C-terminus: tRNA-specific 2-thiouridylase MnmA (375 aa).

ATP contacts are provided by residues 13–20 (AMSGGVDS) and methionine 39. Cysteine 111 (nucleophile) is an active-site residue. Residues cysteine 111 and cysteine 208 are joined by a disulfide bond. Residue glycine 135 coordinates ATP. The tract at residues 158–160 (KDQ) is interaction with tRNA. Cysteine 208 serves as the catalytic Cysteine persulfide intermediate. Positions 313 to 314 (RY) are interaction with tRNA.

Belongs to the MnmA/TRMU family.

The protein localises to the cytoplasm. The enzyme catalyses S-sulfanyl-L-cysteinyl-[protein] + uridine(34) in tRNA + AH2 + ATP = 2-thiouridine(34) in tRNA + L-cysteinyl-[protein] + A + AMP + diphosphate + H(+). Catalyzes the 2-thiolation of uridine at the wobble position (U34) of tRNA, leading to the formation of s(2)U34. This is tRNA-specific 2-thiouridylase MnmA from Geotalea uraniireducens (strain Rf4) (Geobacter uraniireducens).